The sequence spans 219 residues: 7-cyano-7-deazaguanine synthase 2 (219 aa).

An ATP-binding site is contributed by 8-18 (YSGGMDSFTAL). Positions 185, 193, 196, and 199 each coordinate Zn(2+).

Belongs to the QueC family. Zn(2+) is required as a cofactor.

The enzyme catalyses 7-carboxy-7-deazaguanine + NH4(+) + ATP = 7-cyano-7-deazaguanine + ADP + phosphate + H2O + H(+). It functions in the pathway purine metabolism; 7-cyano-7-deazaguanine biosynthesis. Functionally, catalyzes the ATP-dependent conversion of 7-carboxy-7-deazaguanine (CDG) to 7-cyano-7-deazaguanine (preQ(0)). The polypeptide is 7-cyano-7-deazaguanine synthase 2 (Colwellia psychrerythraea (strain 34H / ATCC BAA-681) (Vibrio psychroerythus)).